The following is a 154-amino-acid chain: Protein FasC (154 aa).

It belongs to the periplasmic pilus chaperone family.

Could be required for the biogenesis of a putative fimbria. This chain is Protein FasC (fasC), found in Escherichia coli.